The following is a 64-amino-acid chain: Large ribosomal subunit protein bL28 (64 aa).

Residues 1–23 (MSKECYFTGRKTVSSNNRSHAMN) form a disordered region. Over residues 11-23 (KTVSSNNRSHAMN) the composition is skewed to polar residues.

Belongs to the bacterial ribosomal protein bL28 family.

The protein is Large ribosomal subunit protein bL28 of Lactococcus lactis subsp. cremoris (strain SK11).